The primary structure comprises 530 residues: MNNARPIRRALISVSDKTGIVEFAQALAERGVDILSTGGTARLLAEQGIAVTEVSDYTGFPEMMDGRVKTLHPKVHGGVLGRRGQDDDVMAKHGINPIDMVVVNLYPFAETVAKDGCTLADAVENIDIGGPTMVRSAAKNHKDVTIVVNASDYDRVIAEMDANDKSLTLETRFDLAIAAFEHTAAYDGMIANYFGTMVPSYGENKEGDEESKFPRTFNQQFEKKQDMRYGENSHQAAAFYVEANPQEASVSTARQIQGKALSYNNIADTDAALECVKEFNEPACVIVKHANPCGVALGKDILEAYNRAYQTDPTSAFGGIIAFNQELDAETASAIVERQFVEVIIAPSVSAEAIEVVAAKKNVRLLECGEWTTKTTGFDVKRVNGGLLVQDRDQGMVSLDDLKVVSKRQPTEEELKDALFCWKVAKYVKSNAIVYAKGDMTIGVGAGQMSRVYSAKIAGIKAADEGLEVAGSVMASDAFFPFRDGIDAAAEAGIKCVIQPGGSMRDDEVIAAADEHGMAMIFTGMRHFRH.

Residues 1-148 enclose the MGS-like domain; the sequence is MNNARPIRRA…KNHKDVTIVV (148 aa).

Belongs to the PurH family.

It carries out the reaction (6R)-10-formyltetrahydrofolate + 5-amino-1-(5-phospho-beta-D-ribosyl)imidazole-4-carboxamide = 5-formamido-1-(5-phospho-D-ribosyl)imidazole-4-carboxamide + (6S)-5,6,7,8-tetrahydrofolate. It catalyses the reaction IMP + H2O = 5-formamido-1-(5-phospho-D-ribosyl)imidazole-4-carboxamide. The protein operates within purine metabolism; IMP biosynthesis via de novo pathway; 5-formamido-1-(5-phospho-D-ribosyl)imidazole-4-carboxamide from 5-amino-1-(5-phospho-D-ribosyl)imidazole-4-carboxamide (10-formyl THF route): step 1/1. It functions in the pathway purine metabolism; IMP biosynthesis via de novo pathway; IMP from 5-formamido-1-(5-phospho-D-ribosyl)imidazole-4-carboxamide: step 1/1. This Vibrio parahaemolyticus serotype O3:K6 (strain RIMD 2210633) protein is Bifunctional purine biosynthesis protein PurH.